The following is a 145-amino-acid chain: Probable DNA-directed RNA polymerases I and III subunit RPAC2 (145 aa).

Residues 1–52 (MGKKSEKKVVEETMEVDEQPAVEPEAVPEEEPEVEDEDLNVPKKKKMEILDP) form a disordered region. The segment covering 12 to 39 (ETMEVDEQPAVEPEAVPEEEPEVEDEDL) has biased composition (acidic residues).

The protein belongs to the archaeal Rpo11/eukaryotic RPB11/RPC19 RNA polymerase subunit family. In terms of assembly, component of the RNA polymerase I (Pol I) and RNA polymerase III (Pol III) complexes consisting of at least 13 and 17 subunits, respectively.

Its subcellular location is the nucleus. Its function is as follows. DNA-dependent RNA polymerase catalyzes the transcription of DNA into RNA using the four ribonucleoside triphosphates as substrates. Common core component of RNA polymerases I and III which synthesize ribosomal RNA precursors and small RNAs, such as 5S rRNA and tRNAs, respectively. This Caenorhabditis briggsae protein is Probable DNA-directed RNA polymerases I and III subunit RPAC2 (rpac-19).